The sequence spans 455 residues: Beta-1,4-mannosyltransferase bre-3 (455 aa).

It belongs to the glycosyltransferase 2 family. As to expression, endothelial cells.

It is found in the cytoplasm. It participates in protein modification; protein glycosylation. In terms of biological role, glycosyltransferase with a proposed role in glycosphingolipid biosynthesis. Involved in susceptibility to pore-forming crystal toxins in conjunction with bre-1, bre-2, bre-4 and bre-5. Involved in resistance to the nematotoxic C.cinerea galectin Cgl2. Has a role in determining brood size. The sequence is that of Beta-1,4-mannosyltransferase bre-3 (bre-3) from Caenorhabditis elegans.